Consider the following 571-residue polypeptide: E3 ubiquitin-protein ligase ipaH3 (571 aa).

Residues 1–260 (MSIMLPINNN…SQQTAQPDYH (260 aa)) form an interaction with target proteins region. 9 LRR repeats span residues 58–81 (INQF…LPPQ), 83–99 (TVLE…PELP), 100–119 (ASLE…PELP), 120–144 (ASLK…LLEY), 146–159 (NADN…PELP), 160–184 (TSLE…SLEA), 186–202 (DVST…PVRN), 205–229 (SEET…ILSL), and 232–260 (TCTI…PDYH). A linker region spans residues 269 to 278 (SDGQQNTLHR). The region spanning 279–571 (PLADAVTAWF…SENGSQLHHS (293 aa)) is the NEL domain. The segment at 279-571 (PLADAVTAWF…SENGSQLHHS (293 aa)) is E3 ubiquitin-protein ligase catalytic domain. C363 serves as the catalytic Glycyl thioester intermediate.

It belongs to the LRR-containing bacterial E3 ligase family. Ubiquitinated in the presence of host E1 ubiquitin-activating enzyme, E2 ubiquitin-conjugating enzyme UBE2D3 and ubiquitin.

Its subcellular location is the secreted. The protein localises to the host cytoplasm. The catalysed reaction is S-ubiquitinyl-[E2 ubiquitin-conjugating enzyme]-L-cysteine + [acceptor protein]-L-lysine = [E2 ubiquitin-conjugating enzyme]-L-cysteine + N(6)-ubiquitinyl-[acceptor protein]-L-lysine.. In terms of biological role, effector proteins function to alter host cell physiology and promote bacterial survival in host tissues. This protein is an E3 ubiquitin ligase that interferes with host's ubiquitination pathway. Synthesizes a 'Lys-48'-linked ubiquitin chain, which requires non-covalent binding between ubiquitin and the host ubiquitin-conjugating enzyme UBE2D1. The polypeptide is E3 ubiquitin-protein ligase ipaH3 (ipaH3) (Shigella flexneri).